Consider the following 274-residue polypeptide: Small ribosomal subunit protein uS2 (274 aa).

The protein belongs to the universal ribosomal protein uS2 family.

This chain is Small ribosomal subunit protein uS2, found in Syntrophobacter fumaroxidans (strain DSM 10017 / MPOB).